The primary structure comprises 883 residues: Probable valine--tRNA ligase, cytoplasmic (883 aa).

Positions 1–23 are enriched in basic and acidic residues; the sequence is MTLKMDRKALKEEKKKQKLEKFL. A disordered region spans residues 1–49; the sequence is MTLKMDRKALKEEKKKQKLEKFLNKKTTQSKISKAPKPAKNKSSSGYDP. The segment covering 30 to 45 has biased composition (low complexity); sequence SKISKAPKPAKNKSSS. Residues 82-92 carry the 'HIGH' region motif; it reads PNITGSLHIGH. Residues 586-590 carry the 'KMSKS' region motif; it reads KMSKS. Position 589 (K589) interacts with ATP.

Belongs to the class-I aminoacyl-tRNA synthetase family.

Its subcellular location is the cytoplasm. The catalysed reaction is tRNA(Val) + L-valine + ATP = L-valyl-tRNA(Val) + AMP + diphosphate. The chain is Probable valine--tRNA ligase, cytoplasmic from Vairimorpha ceranae (strain BRL01) (Microsporidian parasite).